The primary structure comprises 166 residues: NADH-quinone oxidoreductase subunit B (166 aa).

[4Fe-4S] cluster-binding residues include Cys44, Cys45, Cys110, and Cys140.

It belongs to the complex I 20 kDa subunit family. NDH-1 is composed of 14 different subunits. Subunits NuoB, C, D, E, F, and G constitute the peripheral sector of the complex. Requires [4Fe-4S] cluster as cofactor.

The protein localises to the cell membrane. The enzyme catalyses a quinone + NADH + 5 H(+)(in) = a quinol + NAD(+) + 4 H(+)(out). In terms of biological role, NDH-1 shuttles electrons from NADH, via FMN and iron-sulfur (Fe-S) centers, to quinones in the respiratory chain. The immediate electron acceptor for the enzyme in this species is believed to be a menaquinone. Couples the redox reaction to proton translocation (for every two electrons transferred, four hydrogen ions are translocated across the cytoplasmic membrane), and thus conserves the redox energy in a proton gradient. The protein is NADH-quinone oxidoreductase subunit B of Carboxydothermus hydrogenoformans (strain ATCC BAA-161 / DSM 6008 / Z-2901).